The following is a 141-amino-acid chain: Large ribosomal subunit protein uL11 (141 aa).

Belongs to the universal ribosomal protein uL11 family. Part of the ribosomal stalk of the 50S ribosomal subunit. Interacts with L10 and the large rRNA to form the base of the stalk. L10 forms an elongated spine to which L12 dimers bind in a sequential fashion forming a multimeric L10(L12)X complex. In terms of processing, one or more lysine residues are methylated.

Its function is as follows. Forms part of the ribosomal stalk which helps the ribosome interact with GTP-bound translation factors. This is Large ribosomal subunit protein uL11 from Synechococcus sp. (strain CC9311).